A 153-amino-acid polypeptide reads, in one-letter code: Phosphatase NudJ (153 aa).

The 129-residue stretch at 3–131 (KPHVTVACVV…LVAESIRCYQ (129 aa)) folds into the Nudix hydrolase domain. The short motif at 36–57 (GHLEADETLVEAAARELWEETG) is the Nudix box element.

This sequence belongs to the Nudix hydrolase family. NudJ subfamily. In terms of assembly, monomer. It depends on Mg(2+) as a cofactor.

The polypeptide is Phosphatase NudJ (nudJ) (Shigella boydii serotype 4 (strain Sb227)).